The primary structure comprises 551 residues: Chaperonin GroEL 4 (551 aa).

Residues 30–33, K51, 87–91, G415, and D495 contribute to the ATP site; these read TLGP and DGTTT.

It belongs to the chaperonin (HSP60) family. In terms of assembly, forms a cylinder of 14 subunits composed of two heptameric rings stacked back-to-back. Interacts with the co-chaperonin GroES.

The protein localises to the cytoplasm. The enzyme catalyses ATP + H2O + a folded polypeptide = ADP + phosphate + an unfolded polypeptide.. Its function is as follows. Together with its co-chaperonin GroES, plays an essential role in assisting protein folding. The GroEL-GroES system forms a nano-cage that allows encapsulation of the non-native substrate proteins and provides a physical environment optimized to promote and accelerate protein folding. The protein is Chaperonin GroEL 4 of Mesorhizobium japonicum (strain LMG 29417 / CECT 9101 / MAFF 303099) (Mesorhizobium loti (strain MAFF 303099)).